The chain runs to 115 residues: Large ribosomal subunit protein bL19 (115 aa).

Belongs to the bacterial ribosomal protein bL19 family.

Functionally, this protein is located at the 30S-50S ribosomal subunit interface and may play a role in the structure and function of the aminoacyl-tRNA binding site. In Francisella philomiragia subsp. philomiragia (strain ATCC 25017 / CCUG 19701 / FSC 153 / O#319-036), this protein is Large ribosomal subunit protein bL19.